A 122-amino-acid chain; its full sequence is Large ribosomal subunit protein uL14 (122 aa).

This sequence belongs to the universal ribosomal protein uL14 family. As to quaternary structure, part of the 50S ribosomal subunit. Forms a cluster with proteins L3 and L19. In the 70S ribosome, L14 and L19 interact and together make contacts with the 16S rRNA in bridges B5 and B8.

Its function is as follows. Binds to 23S rRNA. Forms part of two intersubunit bridges in the 70S ribosome. The polypeptide is Large ribosomal subunit protein uL14 (Mycolicibacterium smegmatis (strain ATCC 700084 / mc(2)155) (Mycobacterium smegmatis)).